The primary structure comprises 251 residues: Endoglucanase CX (251 aa).

It belongs to the glycosyl hydrolase 9 (cellulase E) family.

It catalyses the reaction Endohydrolysis of (1-&gt;4)-beta-D-glucosidic linkages in cellulose, lichenin and cereal beta-D-glucans.. Functionally, degrades carboxymethylcellulose (CMC). This chain is Endoglucanase CX, found in Prunus persica (Peach).